The following is a 123-amino-acid chain: Large ribosomal subunit protein bL12 (123 aa).

It belongs to the bacterial ribosomal protein bL12 family. As to quaternary structure, homodimer. Part of the ribosomal stalk of the 50S ribosomal subunit. Forms a multimeric L10(L12)X complex, where L10 forms an elongated spine to which 2 to 4 L12 dimers bind in a sequential fashion. Binds GTP-bound translation factors.

In terms of biological role, forms part of the ribosomal stalk which helps the ribosome interact with GTP-bound translation factors. Is thus essential for accurate translation. In Bartonella tribocorum (strain CIP 105476 / IBS 506), this protein is Large ribosomal subunit protein bL12.